We begin with the raw amino-acid sequence, 33 residues long: Rhinophrynin-33 (33 aa).

As to expression, expressed by the skin glands.

It is found in the secreted. In terms of biological role, non-cytotoxic peptide with immunosuppressive and insulinotropic effects. Induces an increased production of the anti-inflammatory cytokine IL-10 and inhibits production of the pro-inflammatory cytokines TNF-alpha and IL-1beta, when incubated with mouse peritoneal cells. Does not display growth-inhibitory activity against the Gram-positive S.epidermidis and Gram-negative E.coli bacteria and against the opportunistic yeast pathogen C.parapsilosis (MIC&gt;128 uM). In addition, it lacks cytotoxic activity against mouse erythrocytes (LC(50)&gt;500 uM) and A549 human non-small cell lung adenocarcinoma cells (LC(50)&gt;100 uM). Moderately stimulates insulin release from rat clonal beta-cells and mouse pancreatic islets. Its function is as follows. Non-cytotoxic peptide with immunosuppressive but without insulinotropic effects. Inhibits production of the pro-inflammatory cytokines TNF-alpha, but has no effect on IL-10 and IL-1beta production, when incubated with mouse peritoneal cells. Has no activity of stimulation of insulin release. The sequence is that of Rhinophrynin-33 from Rhinophrynus dorsalis (Mexican burrowing toad).